The primary structure comprises 590 residues: Sperm-associated microtubule inner protein 4 (590 aa).

Threonine 219 carries the phosphothreonine modification. 2 positions are modified to phosphoserine: serine 407 and serine 422. Residue lysine 427 forms a Glycyl lysine isopeptide (Lys-Gly) (interchain with G-Cter in SUMO2) linkage. Residue tyrosine 442 is modified to Phosphotyrosine. At serine 485 the chain carries Phosphoserine. A Glycyl lysine isopeptide (Lys-Gly) (interchain with G-Cter in SUMO2) cross-link involves residue lysine 545. Serine 547 bears the Phosphoserine mark.

In terms of tissue distribution, predominantly expressed in the testes.

The protein resides in the cytoplasm. It localises to the cytoskeleton. The protein localises to the microtubule organizing center. It is found in the centrosome. Its subcellular location is the flagellum axoneme. In terms of biological role, microtubule inner protein (MIP) part of the dynein-decorated doublet microtubules (DMTs) in flagellum axoneme. May serve to reinforce and thus stabilize the microtubule structure in the sperm flagella. This chain is Sperm-associated microtubule inner protein 4, found in Homo sapiens (Human).